The following is a 401-amino-acid chain: Dual-specificity RNA methyltransferase RlmN (401 aa).

The Proton acceptor role is filled by Glu114. The Radical SAM core domain maps to 120 to 365; it reads DKTRGTLCVS…TMVRRTRGDD (246 aa). Residues Cys127 and Cys370 are joined by a disulfide bond. Cys134, Cys138, and Cys141 together coordinate [4Fe-4S] cluster. Residues 187–188, Ser219, 241–243, and Asn327 contribute to the S-adenosyl-L-methionine site; these read GE and SLH. Residue Cys370 is the S-methylcysteine intermediate of the active site.

This sequence belongs to the radical SAM superfamily. RlmN family. [4Fe-4S] cluster serves as cofactor.

Its subcellular location is the cytoplasm. It catalyses the reaction adenosine(2503) in 23S rRNA + 2 reduced [2Fe-2S]-[ferredoxin] + 2 S-adenosyl-L-methionine = 2-methyladenosine(2503) in 23S rRNA + 5'-deoxyadenosine + L-methionine + 2 oxidized [2Fe-2S]-[ferredoxin] + S-adenosyl-L-homocysteine. The catalysed reaction is adenosine(37) in tRNA + 2 reduced [2Fe-2S]-[ferredoxin] + 2 S-adenosyl-L-methionine = 2-methyladenosine(37) in tRNA + 5'-deoxyadenosine + L-methionine + 2 oxidized [2Fe-2S]-[ferredoxin] + S-adenosyl-L-homocysteine. Specifically methylates position 2 of adenine 2503 in 23S rRNA and position 2 of adenine 37 in tRNAs. m2A2503 modification seems to play a crucial role in the proofreading step occurring at the peptidyl transferase center and thus would serve to optimize ribosomal fidelity. This is Dual-specificity RNA methyltransferase RlmN from Stenotrophomonas maltophilia (strain K279a).